Reading from the N-terminus, the 134-residue chain is Cytochrome b5 (134 aa).

At alanine 2 the chain carries N-acetylalanine. N6-acetyllysine occurs at positions 7, 10, and 19. The 77-residue stretch at 9–85 folds into the Cytochrome b5 heme-binding domain; sequence VKYYTLEEIQ…SKTYIIGELH (77 aa). Residues histidine 44 and histidine 68 each coordinate heme. A helical membrane pass occupies residues 109-131; that stretch reads WWTNWVIPAISALAVALMYRLYM.

Belongs to the cytochrome b5 family.

It localises to the endoplasmic reticulum membrane. The protein localises to the microsome membrane. Its function is as follows. Cytochrome b5 is a membrane-bound hemoprotein functioning as an electron carrier for several membrane-bound oxygenases. It is also involved in several steps of the sterol biosynthesis pathway, particularly in the C-5 double bond introduction during the C-5 desaturation. This chain is Cytochrome b5 (Cyb5a), found in Mus musculus (Mouse).